We begin with the raw amino-acid sequence, 587 residues long: Arginine--tRNA ligase (587 aa).

The 'HIGH' region motif lies at 127–137; the sequence is PNLAKEMHVGH.

This sequence belongs to the class-I aminoacyl-tRNA synthetase family. Monomer.

The protein resides in the cytoplasm. The enzyme catalyses tRNA(Arg) + L-arginine + ATP = L-arginyl-tRNA(Arg) + AMP + diphosphate. This chain is Arginine--tRNA ligase, found in Pseudomonas aeruginosa (strain LESB58).